A 315-amino-acid chain; its full sequence is Melanoma-associated antigen 9 (315 aa).

A compositionally biased stretch (basic and acidic residues) spans 1-13; sequence MSLEQRSPHCKPD. Residues 1-67 form a disordered region; it reads MSLEQRSPHC…PQSPQGGASS (67 aa). A compositionally biased stretch (low complexity) spans 50–67; the sequence is SAAGSSSPPQSPQGGASS. The MAGE domain occupies 108–307; the sequence is LKLKVAELVH…ICYPSLYEEV (200 aa).

In terms of tissue distribution, expressed in many tumors of several types, such as melanoma, head and neck squamous cell carcinoma, lung carcinoma and breast carcinoma, but not in normal tissues except for testes and placenta.

Not known, though may play a role in embryonal development and tumor transformation or aspects of tumor progression. The chain is Melanoma-associated antigen 9 (MAGEA9) from Homo sapiens (Human).